Consider the following 101-residue polypeptide: Nucleoid-associated protein Acid345_1974 (101 aa).

It belongs to the YbaB/EbfC family. Homodimer.

It localises to the cytoplasm. It is found in the nucleoid. In terms of biological role, binds to DNA and alters its conformation. May be involved in regulation of gene expression, nucleoid organization and DNA protection. The sequence is that of Nucleoid-associated protein Acid345_1974 from Koribacter versatilis (strain Ellin345).